Reading from the N-terminus, the 76-residue chain is UPF0248 protein MmarC6_0667 (76 aa).

It belongs to the UPF0248 family.

In Methanococcus maripaludis (strain C6 / ATCC BAA-1332), this protein is UPF0248 protein MmarC6_0667.